The primary structure comprises 652 residues: MKKQNNGLIKNPFLWLLFIFFLVTGFQYFYSGNNSGGSQQINYTELVQEITDGNVKELTYQPNGSVIEVSGVYKNPKTSKEETGIQFFTPSVTKVEKFTSTILPADTTVSELQKLATDHKAEVTVKHESSSGIWINLLVSIVPFGILFFFLFSMMGNMGGGNGRNPMSFGRSKAKAANKEDIKVRFSDVAGAEEEKQELVEVVEFLKDPKRFTKLGARIPAGVLLEGPPGTGKTLLAKAVAGEAGVPFFSISGSDFVEMFVGVGASRVRSLFEDAKKAAPAIIFIDEIDAVGRQRGVGLGGGNDEREQTLNQLLIEMDGFEGNEGIIVIAATNRSDVLDPALLRPGRFDRKVLVGRPDVKGREAILKVHAKNKPLAEDVDLKLVAQQTPGFVGADLENVLNEAALVAARRNKSIIDASDIDEAEDRVIAGPSKKDKTVSQKERELVAYHEAGHTIVGLVLSNARVVHKVTIVPRGRAGGYMIALPKEDQMLLSKEDMKEQLAGLMGGRVAEEIIFNVQTTGASNDFEQATQMARAMVTEYGMSEKLGPVQYEGNHAMLGAQSPQKSISEQTAYEIDEEVRSLLNEARNKAAEIIQSNRETHKLIAEALLKYETLDSTQIKALYETGKMPEAVEEESHALSYDEVKSKMNDEK.

Residues 1 to 11 are Cytoplasmic-facing; sequence MKKQNNGLIKN. Residues 12–32 traverse the membrane as a helical segment; that stretch reads PFLWLLFIFFLVTGFQYFYSG. Topologically, residues 33–131 are extracellular; that stretch reads NNSGGSQQIN…EVTVKHESSS (99 aa). Residues 132–152 traverse the membrane as a helical segment; sequence GIWINLLVSIVPFGILFFFLF. The Cytoplasmic segment spans residues 153 to 652; that stretch reads SMMGNMGGGN…EVKSKMNDEK (500 aa). 227–234 contributes to the ATP binding site; that stretch reads GPPGTGKT. Residue His449 participates in Zn(2+) binding. Residue Glu450 is part of the active site. Zn(2+) contacts are provided by His453 and Asp525. The interval 628-652 is disordered; the sequence is MPEAVEEESHALSYDEVKSKMNDEK. Residues 634-652 are compositionally biased toward basic and acidic residues; the sequence is EESHALSYDEVKSKMNDEK.

The protein in the central section; belongs to the AAA ATPase family. It in the C-terminal section; belongs to the peptidase M41 family. In terms of assembly, homohexamer. It depends on Zn(2+) as a cofactor.

It localises to the cell membrane. Functionally, acts as a processive, ATP-dependent zinc metallopeptidase for both cytoplasmic and membrane proteins. Plays a role in the quality control of integral membrane proteins. The sequence is that of ATP-dependent zinc metalloprotease FtsH from Streptococcus pneumoniae serotype 4 (strain ATCC BAA-334 / TIGR4).